The following is an 88-amino-acid chain: Gas vesicle protein A2 (88 aa).

This sequence belongs to the gas vesicle GvpA family. In terms of assembly, the gas vesicle shell is 2 nm thick and consists of a single layer of this protein. It forms helical ribs nearly perpendicular to the long axis of the vesicle.

It is found in the gas vesicle shell. Functionally, gas vesicles are hollow, gas filled proteinaceous nanostructures found in some microorganisms. During planktonic growth they allow positioning of the organism at a favorable depth for light or nutrient acquisition. GvpA forms the protein shell. Its function is as follows. It is not clear if the 2 type A proteins in this organism are functionally redundant. In terms of biological role, when a minimal gvp locus (gvpA2-gvpR-gvpN-gvpF-gvpG-gvpL-gvpS-gvpK-gvpJ-gvpT-gvpU, called pNL29) is expressed in E.coli gas vesicles are made. This chain is Gas vesicle protein A2, found in Priestia megaterium (Bacillus megaterium).